We begin with the raw amino-acid sequence, 201 residues long: Recombination protein RecR (201 aa).

A C4-type zinc finger spans residues 57–72; sequence CTHCRTFTEEESCAIC. The 96-residue stretch at 81-176 folds into the Toprim domain; the sequence is GFLCVVEQPS…KVSRIAHGIP (96 aa).

This sequence belongs to the RecR family.

May play a role in DNA repair. It seems to be involved in an RecBC-independent recombinational process of DNA repair. It may act with RecF and RecO. The sequence is that of Recombination protein RecR from Histophilus somni (strain 129Pt) (Haemophilus somnus).